We begin with the raw amino-acid sequence, 373 residues long: Glutamate 5-kinase 2 (373 aa).

Lysine 11 lines the ATP pocket. Substrate contacts are provided by serine 51, aspartate 138, and asparagine 150. Residues 170-171 (SD) and 212-218 (TGGMKSK) contribute to the ATP site. Positions 279–355 (EGDIVVHNES…TNQETAASSQ (77 aa)) constitute a PUA domain.

It belongs to the glutamate 5-kinase family.

The protein localises to the cytoplasm. The catalysed reaction is L-glutamate + ATP = L-glutamyl 5-phosphate + ADP. The protein operates within amino-acid biosynthesis; L-proline biosynthesis; L-glutamate 5-semialdehyde from L-glutamate: step 1/2. Its function is as follows. Catalyzes the transfer of a phosphate group to glutamate to form L-glutamate 5-phosphate. This chain is Glutamate 5-kinase 2, found in Bacillus licheniformis (strain ATCC 14580 / DSM 13 / JCM 2505 / CCUG 7422 / NBRC 12200 / NCIMB 9375 / NCTC 10341 / NRRL NRS-1264 / Gibson 46).